A 178-amino-acid polypeptide reads, in one-letter code: Protein SPEAR1 (178 aa).

Disordered regions lie at residues 1 to 48 (MGST…QRGL) and 139 to 178 (HFLNEDPSSTTRRSKSLGSGIQHSGSSENQEVDLELRLSL). A compositionally biased stretch (low complexity) spans 14-28 (SSPPSSSPTSSSSSP). Positions 46-54 (RGLGVAQLE) match the SPL motif. Polar residues predominate over residues 144-167 (DPSSTTRRSKSLGSGIQHSGSSEN). The EAR signature appears at 170–176 (VDLELRL).

In terms of assembly, interacts with SPL and SPEAR2. As to expression, not detected in leaves.

Its function is as follows. Adapter-like transcriptional repressor recruiting TPL/TPR corepressors to inhibit TCP transcription factors. This chain is Protein SPEAR1, found in Arabidopsis thaliana (Mouse-ear cress).